Reading from the N-terminus, the 291-residue chain is ATP synthase gamma chain (291 aa).

Belongs to the ATPase gamma chain family. In terms of assembly, F-type ATPases have 2 components, CF(1) - the catalytic core - and CF(0) - the membrane proton channel. CF(1) has five subunits: alpha(3), beta(3), gamma(1), delta(1), epsilon(1). CF(0) has three main subunits: a, b and c.

It is found in the cell inner membrane. Produces ATP from ADP in the presence of a proton gradient across the membrane. The gamma chain is believed to be important in regulating ATPase activity and the flow of protons through the CF(0) complex. This chain is ATP synthase gamma chain, found in Burkholderia ambifaria (strain MC40-6).